Reading from the N-terminus, the 204-residue chain is Holliday junction branch migration complex subunit RuvA (204 aa).

The tract at residues 1 to 64 (MIGRLRGILL…EDAQLLYGFN (64 aa)) is domain I. Residues 65–143 (TVKERALFRE…GWSAGDLFTP (79 aa)) form a domain II region. Residues 144-155 (FTDAAPVDSGST) are flexible linker. The tract at residues 156-204 (SSNSAEEEAVSALLALGYKPVQASKVVSQIAKPDMTSEQLIREALKSMV) is domain III.

It belongs to the RuvA family. As to quaternary structure, homotetramer. Forms an RuvA(8)-RuvB(12)-Holliday junction (HJ) complex. HJ DNA is sandwiched between 2 RuvA tetramers; dsDNA enters through RuvA and exits via RuvB. An RuvB hexamer assembles on each DNA strand where it exits the tetramer. Each RuvB hexamer is contacted by two RuvA subunits (via domain III) on 2 adjacent RuvB subunits; this complex drives branch migration. In the full resolvosome a probable DNA-RuvA(4)-RuvB(12)-RuvC(2) complex forms which resolves the HJ.

The protein localises to the cytoplasm. Its function is as follows. The RuvA-RuvB-RuvC complex processes Holliday junction (HJ) DNA during genetic recombination and DNA repair, while the RuvA-RuvB complex plays an important role in the rescue of blocked DNA replication forks via replication fork reversal (RFR). RuvA specifically binds to HJ cruciform DNA, conferring on it an open structure. The RuvB hexamer acts as an ATP-dependent pump, pulling dsDNA into and through the RuvAB complex. HJ branch migration allows RuvC to scan DNA until it finds its consensus sequence, where it cleaves and resolves the cruciform DNA. The chain is Holliday junction branch migration complex subunit RuvA from Vibrio vulnificus (strain CMCP6).